The sequence spans 51 residues: Defensin (51 aa).

Disulfide bonds link Cys3/Cys31, Cys17/Cys36, and Cys21/Cys38. Phe51 carries the phenylalanine amide modification.

Its subcellular location is the secreted. Its function is as follows. Antibacterial peptide against Gram-positive and Gram-negative bacteria and fungi. The sequence is that of Defensin from Bombus pascuorum (Common carder bumblebee).